We begin with the raw amino-acid sequence, 580 residues long: Netrin-3 (580 aa).

The N-terminal stretch at 1–27 is a signal peptide; it reads MPGWPWGLLLTAGTLFAALSPGPPAPA. Residues 36–254 enclose the Laminin N-terminal domain; that stretch reads APRGCVPGLV…AATDLQVGGR (219 aa). The disordered stretch occupies residues 62-83; the sequence is PATRACDASDPRRAHSPALLTS. 15 disulfides stabilise this stretch: Cys92/Cys125, Cys255/Cys264, Cys257/Cys274, Cys276/Cys285, Cys288/Cys308, Cys311/Cys320, Cys313/Cys338, Cys341/Cys350, Cys353/Cys371, Cys374/Cys386, Cys376/Cys393, Cys395/Cys404, Cys407/Cys421, Cys441/Cys514, and Cys460/Cys577. N-linked (GlcNAc...) asparagine glycosylation is present at Asn104. 3 Laminin EGF-like domains span residues 255–308, 311–371, and 374–421; these read CKCN…SHAC, CSCN…RRAC, and CDCH…VAPC. N-linked (GlcNAc...) asparagine glycosylation occurs at Asn387. Residues 441-577 form the NTR domain; the sequence is CDSHCKPARG…LQRRERRGRC (137 aa). The short motif at 500 to 502 is the Cell attachment site; atypical element; that stretch reads RGS.

As to expression, spinal cord.

It is found in the secreted. Its subcellular location is the extracellular space. The protein localises to the extracellular matrix. In terms of biological role, netrins control guidance of CNS commissural axons and peripheral motor axons. In Homo sapiens (Human), this protein is Netrin-3 (NTN3).